A 309-amino-acid polypeptide reads, in one-letter code: Foldase protein PrsA (309 aa).

The first 22 residues, 1 to 22 (MKTRSKLAAGFLTLMSVATLAA), serve as a signal peptide directing secretion. Cys23 carries N-palmitoyl cysteine lipidation. A lipid anchor (S-diacylglycerol cysteine) is attached at Cys23. The PpiC domain occupies 146 to 241 (TPETSVQVIK…TSYYIIKVTD (96 aa)).

It belongs to the PrsA family.

The protein resides in the cell membrane. The enzyme catalyses [protein]-peptidylproline (omega=180) = [protein]-peptidylproline (omega=0). Plays a major role in protein secretion by helping the post-translocational extracellular folding of several secreted proteins. The chain is Foldase protein PrsA from Streptococcus agalactiae serotype III (strain NEM316).